A 452-amino-acid chain; its full sequence is Ribosomal protein uS12 methylthiotransferase RimO (452 aa).

Residues 3-118 (GKIGFVSLGC…VMQVIHLHLP (116 aa)) enclose the MTTase N-terminal domain. C12, C48, C77, C149, C153, and C156 together coordinate [4Fe-4S] cluster. Residues 135–382 (LTPKHYAYLK…AKAEEISVGR (248 aa)) enclose the Radical SAM core domain. The region spanning 384 to 452 (AKKIGKRLQV…SQGHDLIAET (69 aa)) is the TRAM domain.

It belongs to the methylthiotransferase family. RimO subfamily. The cofactor is [4Fe-4S] cluster.

The protein localises to the cytoplasm. It carries out the reaction L-aspartate(89)-[ribosomal protein uS12]-hydrogen + (sulfur carrier)-SH + AH2 + 2 S-adenosyl-L-methionine = 3-methylsulfanyl-L-aspartate(89)-[ribosomal protein uS12]-hydrogen + (sulfur carrier)-H + 5'-deoxyadenosine + L-methionine + A + S-adenosyl-L-homocysteine + 2 H(+). Functionally, catalyzes the methylthiolation of an aspartic acid residue of ribosomal protein uS12. This Polynucleobacter necessarius subsp. necessarius (strain STIR1) protein is Ribosomal protein uS12 methylthiotransferase RimO.